The following is a 194-amino-acid chain: Dephospho-CoA kinase (194 aa).

Residues 3–194 enclose the DPCK domain; the sequence is TIGLTGGIGS…EQVDGFWGGL (192 aa). 11–16 lines the ATP pocket; it reads GSGKST.

The protein belongs to the CoaE family.

The protein localises to the cytoplasm. It carries out the reaction 3'-dephospho-CoA + ATP = ADP + CoA + H(+). It participates in cofactor biosynthesis; coenzyme A biosynthesis; CoA from (R)-pantothenate: step 5/5. In terms of biological role, catalyzes the phosphorylation of the 3'-hydroxyl group of dephosphocoenzyme A to form coenzyme A. The polypeptide is Dephospho-CoA kinase (Corynebacterium jeikeium (strain K411)).